Here is a 287-residue protein sequence, read N- to C-terminus: Inactive phospholipid phosphatase 7 (287 aa).

The disordered stretch occupies residues 1–75; the sequence is MPANQTRSRA…NNKDKKELPE (75 aa). At 1 to 120 the chain is on the cytoplasmic side; that stretch reads MPANQTRSRA…SSSWGSVRSM (120 aa). Residues 31–40 are compositionally biased toward gly residues; that stretch reads SGGGGGGGES. The span at 49 to 65 shows a compositional bias: low complexity; that stretch reads QRQQQNQQQQGDNPQPE. A helical membrane pass occupies residues 121–141; sequence VKLLALTGHGIPWVFGTIVCL. The Extracellular segment spans residues 142 to 146; the sequence is MRSNT. A helical transmembrane segment spans residues 147–167; sequence LAGQEVLVNLLLALLLDVMTV. At 168 to 215 the chain is on the cytoplasmic side; it reads SGMQKLVKRKGPWEMPPGFFDYLAMDIYSFPAAHASRAVMVSKFLLAH. The chain crosses the membrane as a helical span at residues 216-236; sequence LVLAVPLRILLVLWAILVGIS. Residues 237–247 lie on the Extracellular side of the membrane; that stretch reads RVLLGRHHLTD. The chain crosses the membrane as a helical span at residues 248–268; it reads VGCGFALGFLHYSLVEMVWLS. Topologically, residues 269–287 are cytoplasmic; it reads SNTCQTLISIGTFNWSPLY.

The protein belongs to the PA-phosphatase related phosphoesterase family.

It is found in the nucleus envelope. The protein localises to the endoplasmic reticulum membrane. Its subcellular location is the membrane. Its function is as follows. Plays a role as negative regulator of myoblast differentiation, in part through effects on MTOR signaling. Has no detectable enzymatic activity. In Danio rerio (Zebrafish), this protein is Inactive phospholipid phosphatase 7.